Reading from the N-terminus, the 29-residue chain is Trypsin inhibitor 1 (29 aa).

3 disulfides stabilise this stretch: C3–C20, C10–C22, and C16–C28.

This sequence belongs to the protease inhibitor I7 (squash-type serine protease inhibitor) family.

It localises to the secreted. Its function is as follows. Inhibits trypsin. The polypeptide is Trypsin inhibitor 1 (Luffa aegyptiaca (Sponge gourd)).